Consider the following 238-residue polypeptide: Ribonuclease PH (238 aa).

Phosphate is bound by residues Arg86 and 124–126 (GTR).

The protein belongs to the RNase PH family. Homohexameric ring arranged as a trimer of dimers.

It catalyses the reaction tRNA(n+1) + phosphate = tRNA(n) + a ribonucleoside 5'-diphosphate. Functionally, phosphorolytic 3'-5' exoribonuclease that plays an important role in tRNA 3'-end maturation. Removes nucleotide residues following the 3'-CCA terminus of tRNAs; can also add nucleotides to the ends of RNA molecules by using nucleoside diphosphates as substrates, but this may not be physiologically important. Probably plays a role in initiation of 16S rRNA degradation (leading to ribosome degradation) during starvation. This chain is Ribonuclease PH, found in Vibrio parahaemolyticus serotype O3:K6 (strain RIMD 2210633).